We begin with the raw amino-acid sequence, 686 residues long: MEVVTFGDVAVHFSREEWQCLDPGQRALYREVMLENHSSVAGLAGFLVFKPELISRLEQGEEPWVLDLQGAEGTEAPRTSKTDSTIRTENEQACEDMDILKSESYGTVVRISPQDFPQNPGFGDVSDSEVWLDSHLGSPGLKVTGFTFQNNCLNEETVVPKTFTKDAPQGCKELGSSGLDCQPLESQGESAEGMSQRCEECGKGIRATSDIALHWEINTQKISRCQECQKKLSDCLQGKHTNNCHGEKPYECAECGKVFRLCSQLNQHQRIHTGEKPFKCTECGKAFRLSSKLIQHQRIHTGEKPYRCEECGKAFGQSSSLIHHQRIHTGERPYGCRECGKAFSQQSQLVRHQRTHTGERPYPCKECGKAFSQSSTLAQHQRMHTGEKAQILKASDSPSLVAHQRIHAVEKPFKCDECGKAFRWISRLSQHQLIHTGEKPYKCNKCTKAFGCSSRLIRHQRTHTGEKPFKCDECGKGFVQGSHLIQHQRIHTGEKPYVCNDCGKAFSQSSSLIYHQRIHKGEKPYECLQCGKAFSMSTQLTIHQRVHTGERPYKCNECGKAFSQNSTLFQHQIIHAGVKPYECSECGKAFSRSSYLIEHQRIHTRAQWFYEYGNALEGSIFVSRKKVNTIKKLHQCEDCEKIFRWRSHLIIHQRIHTGEKPYKCNDCGKAFNRSSRLTQHQKIHMG.

The 73-residue stretch at 4 to 76 (VTFGDVAVHF…DLQGAEGTEA (73 aa)) folds into the KRAB domain. Glycyl lysine isopeptide (Lys-Gly) (interchain with G-Cter in SUMO2) cross-links involve residues K81 and K101. 2 positions are modified to phosphoserine: S126 and S138. C2H2-type zinc fingers lie at residues 223–245 (SRCQECQKKLSDCLQGKHTNNCH), 250–272 (YECAECGKVFRLCSQLNQHQRIH), 278–300 (FKCTECGKAFRLSSKLIQHQRIH), 306–328 (YRCEECGKAFGQSSSLIHHQRIH), 334–356 (YGCRECGKAFSQQSQLVRHQRTH), and 362–384 (YPCKECGKAFSQSSTLAQHQRMH). Residues K279 and K292 each participate in a glycyl lysine isopeptide (Lys-Gly) (interchain with G-Cter in SUMO2) cross-link. K393 participates in a covalent cross-link: Glycyl lysine isopeptide (Lys-Gly) (interchain with G-Cter in SUMO2). C2H2-type zinc fingers lie at residues 413 to 435 (FKCDECGKAFRWISRLSQHQLIH), 441 to 463 (YKCNKCTKAFGCSSRLIRHQRTH), 469 to 491 (FKCDECGKGFVQGSHLIQHQRIH), 497 to 519 (YVCNDCGKAFSQSSSLIYHQRIH), 525 to 547 (YECLQCGKAFSMSTQLTIHQRVH), 553 to 575 (YKCNECGKAFSQNSTLFQHQIIH), 581 to 603 (YECSECGKAFSRSSYLIEHQRIH), 634 to 656 (HQCEDCEKIFRWRSHLIIHQRIH), and 662 to 684 (YKCNDCGKAFNRSSRLTQHQKIH).

The protein belongs to the krueppel C2H2-type zinc-finger protein family.

It is found in the nucleus. In terms of biological role, may be involved in transcriptional regulation. This chain is Zinc finger protein 7 (ZNF7), found in Pongo abelii (Sumatran orangutan).